The following is a 409-amino-acid chain: Serine/threonine transporter SstT (409 aa).

9 consecutive transmembrane segments (helical) span residues 14–34 (GSLV…ATLS), 48–68 (FVGA…AASI), 82–102 (IVIL…LMSF), 141–161 (ALMT…GLAL), 192–212 (IGIF…AIAG), 216–236 (LLLV…PAIV), 290–310 (IPLG…ILTL), 322–342 (ILTA…ASGV), and 357–377 (FGIS…IGVI).

The protein belongs to the dicarboxylate/amino acid:cation symporter (DAACS) (TC 2.A.23) family.

Its subcellular location is the cell inner membrane. It catalyses the reaction L-serine(in) + Na(+)(in) = L-serine(out) + Na(+)(out). The catalysed reaction is L-threonine(in) + Na(+)(in) = L-threonine(out) + Na(+)(out). Its function is as follows. Involved in the import of serine and threonine into the cell, with the concomitant import of sodium (symport system). The chain is Serine/threonine transporter SstT from Shewanella woodyi (strain ATCC 51908 / MS32).